A 217-amino-acid polypeptide reads, in one-letter code: Thymidylate kinase (217 aa).

16–23 (GIDGAGKT) contacts ATP.

This sequence belongs to the thymidylate kinase family.

It catalyses the reaction dTMP + ATP = dTDP + ADP. Functionally, phosphorylation of dTMP to form dTDP in both de novo and salvage pathways of dTTP synthesis. This chain is Thymidylate kinase, found in Xylella fastidiosa (strain M23).